We begin with the raw amino-acid sequence, 426 residues long: Melibiose/raffinose/stachyose-binding protein MelE (426 aa).

Positions 1–18 (MKHTFVLFLSLILLVLPG) are cleaved as a signal peptide. Cys19 is lipidated: N-palmitoyl cysteine. The S-diacylglycerol cysteine moiety is linked to residue Cys19.

The protein belongs to the bacterial solute-binding protein 1 family. In terms of assembly, the complex is composed of two ATP-binding proteins (MsmX), two transmembrane proteins (MelC and MelD) and a solute-binding protein (MelE).

The protein localises to the cell membrane. Its function is as follows. Part of the ABC transporter complex MelEDC-MsmX involved in melibiose, raffinose and stachyose import. Binds melibiose, raffinose and stachyose. This Bacillus subtilis (strain 168) protein is Melibiose/raffinose/stachyose-binding protein MelE.